A 339-amino-acid chain; its full sequence is Outer membrane protein assembly factor BamC (339 aa).

An N-terminal signal peptide occupies residues 1-19 (MKFSRQLVLGSLAVLVLSA). The N-palmitoyl cysteine moiety is linked to residue cysteine 20. The S-diacylglycerol cysteine moiety is linked to residue cysteine 20.

It belongs to the BamC family. As to quaternary structure, part of the Bam complex.

Its subcellular location is the cell outer membrane. Functionally, part of the outer membrane protein assembly complex, which is involved in assembly and insertion of beta-barrel proteins into the outer membrane. In Vibrio cholerae serotype O1 (strain ATCC 39315 / El Tor Inaba N16961), this protein is Outer membrane protein assembly factor BamC.